Here is a 127-residue protein sequence, read N- to C-terminus: Holo-[acyl-carrier-protein] synthase (127 aa).

Mg(2+) is bound by residues aspartate 8 and glutamate 56.

It belongs to the P-Pant transferase superfamily. AcpS family. It depends on Mg(2+) as a cofactor.

The protein localises to the cytoplasm. The enzyme catalyses apo-[ACP] + CoA = holo-[ACP] + adenosine 3',5'-bisphosphate + H(+). Its function is as follows. Transfers the 4'-phosphopantetheine moiety from coenzyme A to a Ser of acyl-carrier-protein. The protein is Holo-[acyl-carrier-protein] synthase of Caldanaerobacter subterraneus subsp. tengcongensis (strain DSM 15242 / JCM 11007 / NBRC 100824 / MB4) (Thermoanaerobacter tengcongensis).